We begin with the raw amino-acid sequence, 177 residues long: 3-hydroxyanthranilate 3,4-dioxygenase (177 aa).

An O2-binding site is contributed by Arg47. His51, Glu57, and His95 together coordinate Fe cation. Glu57 lines the substrate pocket. Substrate is bound by residues Arg99 and Glu110. The Fe cation site is built by Cys125, Cys128, Cys162, and Cys165.

Belongs to the 3-HAO family. Homodimer. It depends on Fe(2+) as a cofactor.

The enzyme catalyses 3-hydroxyanthranilate + O2 = (2Z,4Z)-2-amino-3-carboxymuconate 6-semialdehyde. Its pathway is cofactor biosynthesis; NAD(+) biosynthesis; quinolinate from L-kynurenine: step 3/3. Catalyzes the oxidative ring opening of 3-hydroxyanthranilate to 2-amino-3-carboxymuconate semialdehyde, which spontaneously cyclizes to quinolinate. This is 3-hydroxyanthranilate 3,4-dioxygenase from Burkholderia cenocepacia (strain ATCC BAA-245 / DSM 16553 / LMG 16656 / NCTC 13227 / J2315 / CF5610) (Burkholderia cepacia (strain J2315)).